Here is a 417-residue protein sequence, read N- to C-terminus: FAD-dependent monooxygenase aptC (417 aa).

The first 18 residues, 1–18, serve as a signal peptide directing secretion; that stretch reads MTLPVLIIGAGLSGLTTA. Glutamate 32, alanine 43, arginine 117, aspartate 332, and glycine 345 together coordinate FAD.

This sequence belongs to the paxM FAD-dependent monooxygenase family. FAD serves as cofactor.

It carries out the reaction 3,6,8,9-tetrahydroxy-1-oxo-3-(2-oxopropyl)-1,2,3,4-tetrahydroanthracene-2-carboxyl-[ACP] + NADPH + O2 + H(+) = 2,3,6,8,9-pentahydroxy-1-oxo-3-(2-oxopropyl)-1,2,3,4-tetrahydroanthracene-2-carboxyl-[ACP] + NADP(+) + H2O. It functions in the pathway secondary metabolite biosynthesis. Functionally, FAD-dependent monooxygenase; part of the gene cluster that mediates the biosynthesis of asperthecin, an anthraquinone pigment. Polyketide synthase (PKS) aptA catalyzes the formation of the aromatic polyketide from acetyl coenzyme A and seven malonyl coenzyme A molecules. Polyketide is subsequently hydrolyzed by the action of the hydrolase aptB into endocrocin-9-anthrone. Endocrocin-9-anthrone is then oxidized into endocrocin by the monooxygenase aptC. Endocrocin is likely to decarboxylate spontaneously to form emodin which explains why there is no decarboxylase in the asperthecin biosynthesis cluster. Finally, aptC or another endogenous oxygenase catalyzes additional oxidation steps to form asperthecin. This Emericella nidulans (strain FGSC A4 / ATCC 38163 / CBS 112.46 / NRRL 194 / M139) (Aspergillus nidulans) protein is FAD-dependent monooxygenase aptC.